The chain runs to 112 residues: Protein BEX5 (112 aa).

2 stretches are compositionally biased toward basic and acidic residues: residues 1–12 (MEKDPKERREEE) and 30–51 (PKPR…REDM). The segment at 1 to 56 (MEKDPKERREEEQAPVQNEEACPMGGGEGPKPRENVRGDWDPPAQDFREDMPNGLV) is disordered. The his cluster stretch occupies residues 101–105 (HHDHH). A Zn(2+)-binding site is contributed by cysteine 109.

It belongs to the BEX family. Ubiquitinated. Degraded by the proteasome.

It localises to the cytoplasm. This chain is Protein BEX5 (BEX5), found in Bos taurus (Bovine).